A 202-amino-acid polypeptide reads, in one-letter code: Adapter protein MecA 2 (202 aa).

This sequence belongs to the MecA family. Homodimer.

Enables the recognition and targeting of unfolded and aggregated proteins to the ClpC protease or to other proteins involved in proteolysis. Acts negatively in the development of competence by binding ComK and recruiting it to the ClpCP protease. When overexpressed, inhibits sporulation. Also involved in Spx degradation by ClpC. This chain is Adapter protein MecA 2 (mecA2), found in Bacillus anthracis.